The primary structure comprises 63 residues: Cytochrome c oxidase subunit 5C (63 aa).

A helical transmembrane segment spans residues 16-34 (VVKEIFIGLTLGLVAGGMW).

The protein belongs to the cytochrome c oxidase subunit 5C family.

Its subcellular location is the mitochondrion inner membrane. Functionally, this protein is one of the nuclear-coded polypeptide chains of cytochrome c oxidase, the terminal oxidase in mitochondrial electron transport. The chain is Cytochrome c oxidase subunit 5C (COX5C) from Hordeum vulgare (Barley).